A 119-amino-acid polypeptide reads, in one-letter code: Large ribosomal subunit protein bL20 (119 aa).

This sequence belongs to the bacterial ribosomal protein bL20 family.

Its function is as follows. Binds directly to 23S ribosomal RNA and is necessary for the in vitro assembly process of the 50S ribosomal subunit. It is not involved in the protein synthesizing functions of that subunit. The sequence is that of Large ribosomal subunit protein bL20 from Thermoanaerobacter pseudethanolicus (strain ATCC 33223 / 39E) (Clostridium thermohydrosulfuricum).